Consider the following 425-residue polypeptide: Glutamate-1-semialdehyde 2,1-aminomutase (425 aa).

Lys-265 carries the post-translational modification N6-(pyridoxal phosphate)lysine.

This sequence belongs to the class-III pyridoxal-phosphate-dependent aminotransferase family. HemL subfamily. As to quaternary structure, homodimer. It depends on pyridoxal 5'-phosphate as a cofactor.

It is found in the cytoplasm. The enzyme catalyses (S)-4-amino-5-oxopentanoate = 5-aminolevulinate. Its pathway is porphyrin-containing compound metabolism; protoporphyrin-IX biosynthesis; 5-aminolevulinate from L-glutamyl-tRNA(Glu): step 2/2. In Psychromonas ingrahamii (strain DSM 17664 / CCUG 51855 / 37), this protein is Glutamate-1-semialdehyde 2,1-aminomutase.